A 365-amino-acid chain; its full sequence is Autoinducer 2-binding periplasmic protein LuxP (365 aa).

Positions 1–23 (MKKALLFSLISMVGFSPASQATQ) are cleaved as a signal peptide.

Belongs to the bacterial solute-binding protein 2 family.

Its subcellular location is the periplasm. Its function is as follows. Binds to the signaling molecule autoinducer 2 (AI-2), a furanosyl borate diester, (3a-methyl-5,6-dihydrofuro-[2,3d][1,3,2]dioxaborole-2,2,6,6a-tetraol). This complex then interacts with the LuxQ sensor protein. The protein is Autoinducer 2-binding periplasmic protein LuxP (luxP) of Vibrio harveyi (Beneckea harveyi).